A 231-amino-acid polypeptide reads, in one-letter code: Homeobox protein EMX1 (231 aa).

A DNA-binding region (homeobox) is located at residues 133–192 (PKRIRTAFSPSQLLRLERAFEKNHYVVGAERKQLANSLSLSETQVKVWFQNRRTKYKRQK). The segment at 193 to 231 (LEEEGPECTQKKKGNHHINRWRIATKQTGSEDIDVMSDA) is disordered. Over residues 203-212 (KKKGNHHINR) the composition is skewed to basic residues.

The protein belongs to the EMX homeobox family.

It localises to the nucleus. May function in combinations with OTX1/2 to specify cell fates in the developing central nervous system. This is Homeobox protein EMX1 (emx1) from Danio rerio (Zebrafish).